A 510-amino-acid polypeptide reads, in one-letter code: GMP synthase [glutamine-hydrolyzing] (510 aa).

The region spanning glutamine 3 to lysine 194 is the Glutamine amidotransferase type-1 domain. Cysteine 80 functions as the Nucleophile in the catalytic mechanism. Active-site residues include histidine 168 and glutamate 170. A GMPS ATP-PPase domain is found at tryptophan 195–isoleucine 385. Serine 222 to serine 228 contacts ATP.

In terms of assembly, homodimer.

The catalysed reaction is XMP + L-glutamine + ATP + H2O = GMP + L-glutamate + AMP + diphosphate + 2 H(+). The protein operates within purine metabolism; GMP biosynthesis; GMP from XMP (L-Gln route): step 1/1. Catalyzes the synthesis of GMP from XMP. This is GMP synthase [glutamine-hydrolyzing] from Elusimicrobium minutum (strain Pei191).